We begin with the raw amino-acid sequence, 382 residues long: Mating-type protein a-1 (382 aa).

A DNA-binding region (HMG box) is located at residues Ile-116–Arg-184.

As to quaternary structure, binds in vitro to DNA containing a specific core sequence 5'-CTTTG-3'.

The protein resides in the nucleus. Functionally, mating type proteins are sequence specific DNA-binding proteins that act as master switches in yeast differentiation by controlling gene expression in a cell type-specific fashion. Transcriptional activator that induces the transcription of a-specific genes like mating factor mfa-1. Required for mating as an a-cell, blocking of heterokaryon formation (vegetative incompatibility) and for perithecium induction. The polypeptide is Mating-type protein a-1 (mta-1) (Neurospora crassa).